We begin with the raw amino-acid sequence, 462 residues long: MEKTMEKIVSLAKARGFVYPGSEIYGGLANTWDYGNLGVELKNNVKKAWWQKFVQESPYNVGVDCAILMNPQTWVASGHLGGFSDPLMDCKECHERFRADKLIEDWADENSYDLGGSVDGWTQEQMKNFIDEKNICCPSCGKHNFTDIRQFNLMFKTFQGVTEDAKNTVYLRPETAQGIFVNFKNVQRTSRKKVPFGIGQIGKSFRNEITPGNFTFRTREFEQMELEFFCKPGTDLEWFTYWRQYCIDWLKALGIKEDEMRARDHSPEELCFYSKGTTDIEFLFPFGWGELWGIADRTDYDLTQHQTVSGEDMSYFDDEAKEKYIPYVIEPSLGADRVTLAFLCSAYDEEELEGGDVRTVLHFHPAIAPVKIGILPLSKKLNEGAEKVYAELSKYYNCEFDDRGNIGKRYRRQDEIGTPFCITYDFDSEEDGAVTVRDRDTMQQERIKIADLKAYFEDKFRF.

Positions 98 and 174 each coordinate substrate. ATP is bound by residues 206-208, 216-221, 290-291, and 334-337; these read RNE, FRTREF, EL, and GADR. 221–225 lines the substrate pocket; the sequence is FEQME. 330–334 provides a ligand contact to substrate; sequence EPSLG.

It belongs to the class-II aminoacyl-tRNA synthetase family. In terms of assembly, homodimer.

It localises to the cytoplasm. It catalyses the reaction tRNA(Gly) + glycine + ATP = glycyl-tRNA(Gly) + AMP + diphosphate. Its function is as follows. Catalyzes the attachment of glycine to tRNA(Gly). The polypeptide is Glycine--tRNA ligase (Lachnospira eligens (strain ATCC 27750 / DSM 3376 / VPI C15-48 / C15-B4) (Eubacterium eligens)).